The following is a 483-amino-acid chain: 6-phosphogluconate dehydrogenase, decarboxylating (483 aa).

Residues 10–15 and 33–35 contribute to the NADP(+) site; these read GLAVMG and NRT. K38 bears the N6-acetyllysine mark. S57 is modified (phosphoserine). NADP(+)-binding positions include 75 to 77 and N103; that span reads VKA. Substrate contacts are provided by N103, S129, and G131. At S129 the chain carries Phosphoserine. The Proton acceptor role is filled by K184. Substrate is bound at residue 187 to 188; it reads HN. E191 (proton donor) is an active-site residue. Substrate-binding residues include Y192, K261, R288, R447, and H453. 478-481 lines the NADP(+) pocket; the sequence is SSSY.

It belongs to the 6-phosphogluconate dehydrogenase family. In terms of assembly, homodimer.

The protein localises to the cytoplasm. It catalyses the reaction 6-phospho-D-gluconate + NADP(+) = D-ribulose 5-phosphate + CO2 + NADPH. It participates in carbohydrate degradation; pentose phosphate pathway; D-ribulose 5-phosphate from D-glucose 6-phosphate (oxidative stage): step 3/3. Functionally, catalyzes the oxidative decarboxylation of 6-phosphogluconate to ribulose 5-phosphate and CO(2), with concomitant reduction of NADP to NADPH. This Ovis aries (Sheep) protein is 6-phosphogluconate dehydrogenase, decarboxylating (PGD).